A 407-amino-acid chain; its full sequence is Tryptophan synthase beta chain (407 aa).

Position 98 is an N6-(pyridoxal phosphate)lysine (lysine 98).

Belongs to the TrpB family. In terms of assembly, tetramer of two alpha and two beta chains. The cofactor is pyridoxal 5'-phosphate.

It catalyses the reaction (1S,2R)-1-C-(indol-3-yl)glycerol 3-phosphate + L-serine = D-glyceraldehyde 3-phosphate + L-tryptophan + H2O. It functions in the pathway amino-acid biosynthesis; L-tryptophan biosynthesis; L-tryptophan from chorismate: step 5/5. Functionally, the beta subunit is responsible for the synthesis of L-tryptophan from indole and L-serine. In Bradyrhizobium sp. (strain ORS 278), this protein is Tryptophan synthase beta chain.